Here is a 119-residue protein sequence, read N- to C-terminus: MARVKRGVVAHRRHKKILARTKGYYGARSRVYRVAFQAVIKAGQYAYRDRRQKKRQFRALWIARINAGARQNGLSYSRMIDGLKKAQVIIDRRVLADIAMHDAVAFAALAEKAKGALAA.

The protein belongs to the bacterial ribosomal protein bL20 family.

Its function is as follows. Binds directly to 23S ribosomal RNA and is necessary for the in vitro assembly process of the 50S ribosomal subunit. It is not involved in the protein synthesizing functions of that subunit. The protein is Large ribosomal subunit protein bL20 of Acinetobacter baumannii (strain SDF).